The following is a 469-amino-acid chain: Aspartyl/glutamyl-tRNA(Asn/Gln) amidotransferase subunit B (469 aa).

It belongs to the GatB/GatE family. GatB subfamily. In terms of assembly, heterotrimer of A, B and C subunits.

The catalysed reaction is L-glutamyl-tRNA(Gln) + L-glutamine + ATP + H2O = L-glutaminyl-tRNA(Gln) + L-glutamate + ADP + phosphate + H(+). It catalyses the reaction L-aspartyl-tRNA(Asn) + L-glutamine + ATP + H2O = L-asparaginyl-tRNA(Asn) + L-glutamate + ADP + phosphate + 2 H(+). Allows the formation of correctly charged Asn-tRNA(Asn) or Gln-tRNA(Gln) through the transamidation of misacylated Asp-tRNA(Asn) or Glu-tRNA(Gln) in organisms which lack either or both of asparaginyl-tRNA or glutaminyl-tRNA synthetases. The reaction takes place in the presence of glutamine and ATP through an activated phospho-Asp-tRNA(Asn) or phospho-Glu-tRNA(Gln). The polypeptide is Aspartyl/glutamyl-tRNA(Asn/Gln) amidotransferase subunit B (Methanococcus maripaludis (strain C6 / ATCC BAA-1332)).